The chain runs to 310 residues: Methionyl-tRNA formyltransferase (310 aa).

109-112 lines the (6S)-5,6,7,8-tetrahydrofolate pocket; the sequence is SLLP.

It belongs to the Fmt family.

The catalysed reaction is L-methionyl-tRNA(fMet) + (6R)-10-formyltetrahydrofolate = N-formyl-L-methionyl-tRNA(fMet) + (6S)-5,6,7,8-tetrahydrofolate + H(+). Its function is as follows. Attaches a formyl group to the free amino group of methionyl-tRNA(fMet). The formyl group appears to play a dual role in the initiator identity of N-formylmethionyl-tRNA by promoting its recognition by IF2 and preventing the misappropriation of this tRNA by the elongation apparatus. The polypeptide is Methionyl-tRNA formyltransferase (Staphylococcus epidermidis (strain ATCC 35984 / DSM 28319 / BCRC 17069 / CCUG 31568 / BM 3577 / RP62A)).